The primary structure comprises 190 residues: MSIKEDKWIRKMALAHGMIEPFADGQVNVDAETGEKLISYGLSSYGYDLRLSREFKVFTNVYNSLVDPKHFTEDTFISITDDVCIIPPNSFALAHSVEYFRIPRNILTMCIGKSTYARCGLIVNVTPFEPEWEGYVTIEISNTTPLPAKIYANEGIAQVLFFEADEMCEVSYAERKGKYQKQQGITVPFV.

113–118 (KSTYAR) lines the dCTP pocket. Catalysis depends on Glu139, which acts as the Proton donor/acceptor. Residues Gln158, Tyr172, Lys181, and Gln182 each coordinate dCTP.

This sequence belongs to the dCTP deaminase family. In terms of assembly, homotrimer.

The enzyme catalyses dCTP + H2O + H(+) = dUTP + NH4(+). Its pathway is pyrimidine metabolism; dUMP biosynthesis; dUMP from dCTP (dUTP route): step 1/2. Catalyzes the deamination of dCTP to dUTP. The sequence is that of dCTP deaminase from Chlamydia caviae (strain ATCC VR-813 / DSM 19441 / 03DC25 / GPIC) (Chlamydophila caviae).